The primary structure comprises 216 residues: Large ribosomal subunit protein uL4 (216 aa).

The segment at 47 to 77 (THKVKGMGEVSGTTKKPYRQKGTGNARQGSL) is disordered.

The protein belongs to the universal ribosomal protein uL4 family. As to quaternary structure, part of the 50S ribosomal subunit.

In terms of biological role, one of the primary rRNA binding proteins, this protein initially binds near the 5'-end of the 23S rRNA. It is important during the early stages of 50S assembly. It makes multiple contacts with different domains of the 23S rRNA in the assembled 50S subunit and ribosome. Functionally, forms part of the polypeptide exit tunnel. The sequence is that of Large ribosomal subunit protein uL4 from Acidiphilium cryptum (strain JF-5).